The following is a 95-amino-acid chain: uncharacterized protein (95 aa).

Belongs to the inositol monophosphatase superfamily.

This is an uncharacterized protein from Rhizobium leguminosarum bv. phaseoli.